Reading from the N-terminus, the 445-residue chain is Guanosine nucleotide diphosphate dissociation inhibitor At5g09550 (445 aa).

The protein belongs to the Rab GDI family.

In terms of biological role, regulates the GDP/GTP exchange reaction of most RAB proteins by inhibiting the dissociation of GDP from them, and the subsequent binding of GTP. The sequence is that of Guanosine nucleotide diphosphate dissociation inhibitor At5g09550 from Arabidopsis thaliana (Mouse-ear cress).